The primary structure comprises 327 residues: GMP reductase (327 aa).

Cys-176 functions as the Thioimidate intermediate in the catalytic mechanism. 205-228 is a binding site for NADP(+); that stretch reads IIADGGIRTHGDIAKSIRFGASMV.

It belongs to the IMPDH/GMPR family. GuaC type 2 subfamily.

It catalyses the reaction IMP + NH4(+) + NADP(+) = GMP + NADPH + 2 H(+). In terms of biological role, catalyzes the irreversible NADPH-dependent deamination of GMP to IMP. It functions in the conversion of nucleobase, nucleoside and nucleotide derivatives of G to A nucleotides, and in maintaining the intracellular balance of A and G nucleotides. The polypeptide is GMP reductase (Streptococcus gordonii (strain Challis / ATCC 35105 / BCRC 15272 / CH1 / DL1 / V288)).